Here is a 3387-residue protein sequence, read N- to C-terminus: Genome polyprotein (3387 aa).

Over 1–100 the chain is Cytoplasmic; it reads MNQRKKVVRP…LNILNGRKRS (100 aa). The hydrophobic; homodimerization of capsid protein C stretch occupies residues 36–71; the sequence is LFSGKGPLRMVLAFITFLRVLSIPPTAGILKRWGQL. The propeptide at 100-113 is ER anchor for the capsid protein C, removed in mature form by serine protease NS3; it reads STVTLLCLIPTVMA. The helical transmembrane segment at 101–117 threads the bilayer; sequence TVTLLCLIPTVMAFHLS. Topologically, residues 118–237 are extracellular; that stretch reads TRDGEPLMIV…GAWKHAQRVE (120 aa). A glycan (N-linked (GlcNAc...) asparagine; by host) is linked at Asn182. The helical transmembrane segment at 238–258 threads the bilayer; that stretch reads SWILRNPGFALLAGFMAYMIG. Residues 259–265 are Cytoplasmic-facing; that stretch reads QTGIQRT. A helical membrane pass occupies residues 266-279; that stretch reads VFFVLMMLVAPSYG. Topologically, residues 280 to 725 are extracellular; the sequence is MRCIGVGNRD…HQVFGSVYTT (446 aa). 4 disulfide bridges follow: Cys282/Cys309, Cys339/Cys400, Cys353/Cys384, and Cys371/Cys395. A glycan (N-linked (GlcNAc...) asparagine; by host) is linked at Asn346. A fusion peptide region spans residues 377 to 390; the sequence is DRGWGNGCGLFGKG. The N-linked (GlcNAc...) asparagine; by host glycan is linked to Asn432. Intrachain disulfides connect Cys464–Cys564 and Cys581–Cys612. Residues 726-746 traverse the membrane as a helical segment; the sequence is MFGGVSWMVRILIGLLVLWIG. Residues 747-751 are Cytoplasmic-facing; it reads TNSRN. The chain crosses the membrane as a helical span at residues 752 to 772; sequence TPMAMTCIAVGGITLFLGFTV. At 773–1193 the chain is on the extracellular side; sequence QADMGCVVSW…IMLGDTMLSR (421 aa). Cystine bridges form between Cys778–Cys789, Cys829–Cys917, Cys953–Cys997, Cys1054–Cys1103, Cys1065–Cys1087, and Cys1086–Cys1090. Residues Asn904 and Asn981 are each glycosylated (N-linked (GlcNAc...) asparagine; by host). The helical transmembrane segment at 1194–1218 threads the bilayer; it reads VGGQTHLAIMIVFKMSPGYVLGVFL. Over 1219–1224 the chain is Lumenal; it reads RKLTSR. The chain crosses the membrane as a helical span at residues 1225–1243; that stretch reads ETALMVIGMAMTTVFSIPH. The Cytoplasmic segment spans residues 1244–1267; that stretch reads DLMELIDGISLGLILLKMVTHFDN. The chain crosses the membrane as a helical span at residues 1268-1288; the sequence is TQVGTLALSLTFIRSTMPLTM. A topological domain (lumenal) is located at residue Ala1289. The helical transmembrane segment at 1290–1308 threads the bilayer; the sequence is WRTIMAVLFAVTLIPLCRT. Topologically, residues 1309–1316 are lumenal; that stretch reads SCLQKQSH. Residues 1317 to 1337 form a helical membrane-spanning segment; it reads WVEITAIILGAQALPVYLMTL. The Cytoplasmic segment spans residues 1338–1345; that stretch reads MKGASKRS. The helical transmembrane segment at 1346–1366 threads the bilayer; sequence WPLNEGIMAVGLVSLLGSALL. Topologically, residues 1367–1369 are lumenal; that stretch reads KND. A helical membrane pass occupies residues 1370–1390; that stretch reads VPLAGPMVAGGLLLAAYVMSG. The Cytoplasmic segment spans residues 1391–1444; it reads SSADLSLERAANVQWDEMADITGSSPIIEVKQDEDGSFSIRDVEETNMITLLVK. The interval 1397-1436 is interacts with and activates NS3 protease; sequence LERAANVQWDEMADITGSSPIIEVKQDEDGSFSIRDVEET. Residues 1445–1465 constitute an intramembrane region (helical); it reads LALITVSGLYPLAIPITMTLW. The Cytoplasmic segment spans residues 1466-2146; sequence YMWQVRTQRS…LNELPESLET (681 aa). The Peptidase S7 domain occupies 1475 to 1652; it reads SGALWDVPSP…ERIGEPDYEV (178 aa). Residues His1525, Asp1549, and Ser1609 each act as charge relay system; for serine protease NS3 activity in the active site. One can recognise a Helicase ATP-binding domain in the interval 1654–1810; that stretch reads EDIFRKKRLT…QSNSPIEDIE (157 aa). Residues 1658 to 1661 are important for RNA-binding; the sequence is RKKR. Residue 1667–1674 participates in ATP binding; the sequence is LHPGAGKT. Positions 1758–1761 match the DEAH box motif; it reads DEAH. The Helicase C-terminal domain occupies 1820–1987; it reads TGFDWITDYQ…IIPTLFGPER (168 aa). Lys1862 bears the N6-acetyllysine; by host mark. The helical transmembrane segment at 2147–2167 threads the bilayer; the sequence is LMLVALLGAMTAGIFLFFMQG. Topologically, residues 2168–2169 are lumenal; it reads KG. Positions 2170 to 2190 form an intramembrane region, helical; the sequence is IGKLSVGLIAIAVASGLLWVA. Residue Glu2191 is a topological domain, lumenal. A helical membrane pass occupies residues 2192–2212; it reads IQPQWIAASIILEFFLMVLLI. Topologically, residues 2213–2225 are cytoplasmic; sequence PEPEKQRTPQDNQ. The helical transmembrane segment at 2226 to 2246 threads the bilayer; sequence LIYVILAILTIIGLVAANEMG. Over 2247 to 2270 the chain is Lumenal; sequence LIEKTKADFGFYQVKTETTILDVD. The helical intramembrane region spans 2271 to 2291; it reads LRPASAWTLYAVATTILTPML. At 2292 to 2301 the chain is on the lumenal side; the sequence is RHTIENTSAN. Asn2297 and Asn2301 each carry an N-linked (GlcNAc...) asparagine; by host glycan. The segment at residues 2302–2322 is an intramembrane region (helical); it reads LSLAAIANQAAVLMGLGKGWP. Residues 2323–2343 are Lumenal-facing; it reads LHRMDLGVPLLAMGCYSQVNP. Residues 2344-2364 traverse the membrane as a helical segment; sequence TTLTASLVMLLVHYAIIGPGL. The Cytoplasmic segment spans residues 2365 to 2409; the sequence is QAKATREAQKRTAAGIMKNPTVDGITVIDLEPISYDPKFEKQLGQ. A helical membrane pass occupies residues 2410–2430; that stretch reads VMLLVLCAGQLLLMRTTWAFC. Topologically, residues 2431–2455 are lumenal; the sequence is EVLTLATGPVLTLWEGNPGRFWNTT. N-linked (GlcNAc...) asparagine; by host glycosylation is present at Asn2453. Residues 2456–2476 form a helical membrane-spanning segment; it reads IAVSTANIFRGSYLAGAGLAF. Over 2477 to 3387 the chain is Cytoplasmic; sequence SLIKNAQTPR…SALSESEGVL (911 aa). The mRNA cap 0-1 NS5-type MT domain occupies 2489-2751; it reads TGTTGETLGE…DVDLGAGTRS (263 aa). Ser2543 provides a ligand contact to S-adenosyl-L-methionine. Residue Ser2543 is modified to Phosphoserine. Lys2548 acts as the For 2'-O-MTase activity in catalysis. The SUMO-interacting motif signature appears at 2564 to 2567; the sequence is VVDL. S-adenosyl-L-methionine contacts are provided by Gly2573, Trp2574, Thr2591, Lys2592, Asp2618, and Val2619. Asp2633 functions as the For 2'-O-MTase activity in the catalytic mechanism. Ile2634 is an S-adenosyl-L-methionine binding site. Residues Lys2668 and Glu2704 each act as for 2'-O-MTase activity in the active site. Residue Tyr2706 coordinates S-adenosyl-L-methionine. Glu2925, His2929, Cys2934, and Cys2937 together coordinate Zn(2+). The 151-residue stretch at 3016–3166 folds into the RdRp catalytic domain; sequence LMYADDTAGW…PLDERFSTSL (151 aa). Positions 3200, 3216, and 3335 each coordinate Zn(2+).

In the N-terminal section; belongs to the class I-like SAM-binding methyltransferase superfamily. mRNA cap 0-1 NS5-type methyltransferase family. In terms of assembly, homodimer. Interacts (via N-terminus) with host EXOC1 (via C-terminus); this interaction results in EXOC1 degradation through the proteasome degradation pathway. Forms heterodimers with envelope protein E in the endoplasmic reticulum and Golgi. As to quaternary structure, homodimer; in the endoplasmic reticulum and Golgi. Interacts with protein prM. Interacts with non-structural protein 1. In terms of assembly, homodimer; Homohexamer when secreted. Interacts with envelope protein E. Interacts (via N-terminus) with serine protease NS3. As to quaternary structure, forms a heterodimer with serine protease NS3. May form homooligomers. In terms of assembly, forms a heterodimer with NS2B. Interacts with NS4B. Interacts with unphosphorylated RNA-directed RNA polymerase NS5; this interaction stimulates RNA-directed RNA polymerase NS5 guanylyltransferase activity. Interacts with host SHFL. Interacts with host MAVS; this interaction inhibits the synthesis of IFN-beta. Interacts with host SHFL. Interacts with host AUP1; the interaction occurs in the presence of Dengue virus NS4B and induces lipophagy which facilitates production of virus progeny particles. As to quaternary structure, interacts with serine protease NS3. In terms of assembly, homodimer. Interacts with host STAT2; this interaction inhibits the phosphorylation of the latter, and, when all viral proteins are present (polyprotein), targets STAT2 for degradation. Interacts with serine protease NS3. Interacts with host PAF1 complex; the interaction may prevent the recruitment of the PAF1 complex to interferon-responsive genes, and thus reduces the immune response. In terms of processing, specific enzymatic cleavages in vivo yield mature proteins. Cleavages in the lumen of endoplasmic reticulum are performed by host signal peptidase, whereas cleavages in the cytoplasmic side are performed by serine protease NS3. Signal cleavage at the 2K-4B site requires a prior NS3 protease-mediated cleavage at the 4A-2K site. Cleaved in post-Golgi vesicles by a host furin, releasing the mature small envelope protein M, and peptide pr. This cleavage is incomplete as up to 30% of viral particles still carry uncleaved prM. Post-translationally, N-glycosylated. In terms of processing, N-glycosylated. The excreted form is glycosylated and this is required for efficient secretion of the protein from infected cells. Acetylated by host KAT5. Acetylation modulates NS3 RNA-binding and unwinding activities and plays an important positive role for viral replication. Post-translationally, sumoylation of RNA-directed RNA polymerase NS5 increases NS5 protein stability allowing proper viral RNA replication. In terms of processing, phosphorylated on serines residues. This phosphorylation may trigger NS5 nuclear localization.

The protein resides in the virion. It localises to the host nucleus. The protein localises to the host cytoplasm. Its subcellular location is the host perinuclear region. It is found in the secreted. The protein resides in the virion membrane. It localises to the host endoplasmic reticulum membrane. The protein localises to the host mitochondrion. It carries out the reaction Selective hydrolysis of -Xaa-Xaa-|-Yaa- bonds in which each of the Xaa can be either Arg or Lys and Yaa can be either Ser or Ala.. The enzyme catalyses RNA(n) + a ribonucleoside 5'-triphosphate = RNA(n+1) + diphosphate. It catalyses the reaction a ribonucleoside 5'-triphosphate + H2O = a ribonucleoside 5'-diphosphate + phosphate + H(+). The catalysed reaction is ATP + H2O = ADP + phosphate + H(+). It carries out the reaction a 5'-end (5'-triphosphoguanosine)-ribonucleoside in mRNA + S-adenosyl-L-methionine = a 5'-end (N(7)-methyl 5'-triphosphoguanosine)-ribonucleoside in mRNA + S-adenosyl-L-homocysteine. The enzyme catalyses a 5'-end (N(7)-methyl 5'-triphosphoguanosine)-ribonucleoside in mRNA + S-adenosyl-L-methionine = a 5'-end (N(7)-methyl 5'-triphosphoguanosine)-(2'-O-methyl-ribonucleoside) in mRNA + S-adenosyl-L-homocysteine + H(+). Plays a role in virus budding by binding to the cell membrane and gathering the viral RNA into a nucleocapsid that forms the core of a mature virus particle. During virus entry, may induce genome penetration into the host cytoplasm after hemifusion induced by the surface proteins. Can migrate to the cell nucleus where it modulates host functions. Overcomes the anti-viral effects of host EXOC1 by sequestering and degrading the latter through the proteasome degradation pathway. Functionally, inhibits RNA silencing by interfering with host Dicer. In terms of biological role, prevents premature fusion activity of envelope proteins in trans-Golgi by binding to envelope protein E at pH6.0. After virion release in extracellular space, gets dissociated from E dimers. Its function is as follows. Acts as a chaperone for envelope protein E during intracellular virion assembly by masking and inactivating envelope protein E fusion peptide. prM is the only viral peptide matured by host furin in the trans-Golgi network probably to avoid catastrophic activation of the viral fusion activity in acidic Golgi compartment prior to virion release. prM-E cleavage is inefficient, and many virions are only partially matured. These uncleaved prM would play a role in immune evasion. May play a role in virus budding. Exerts cytotoxic effects by activating a mitochondrial apoptotic pathway through M ectodomain. May display a viroporin activity. Functionally, binds to host cell surface receptor and mediates fusion between viral and cellular membranes. Envelope protein is synthesized in the endoplasmic reticulum in the form of heterodimer with protein prM. They play a role in virion budding in the ER, and the newly formed immature particle is covered with 60 spikes composed of heterodimer between precursor prM and envelope protein E. The virion is transported to the Golgi apparatus where the low pH causes dissociation of PrM-E heterodimers and formation of E homodimers. prM-E cleavage is inefficient, and many virions are only partially matured. These uncleaved prM would play a role in immune evasion. In terms of biological role, involved in immune evasion, pathogenesis and viral replication. Once cleaved off the polyprotein, is targeted to three destinations: the viral replication cycle, the plasma membrane and the extracellular compartment. Essential for viral replication. Required for formation of the replication complex and recruitment of other non-structural proteins to the ER-derived membrane structures. Excreted as a hexameric lipoparticle that plays a role against host immune response. Antagonizing the complement function. Binds to the host macrophages and dendritic cells. Inhibits signal transduction originating from Toll-like receptor 3 (TLR3). Its function is as follows. Disrupts the host endothelial glycocalyx layer of host pulmonary microvascular endothelial cells, inducing degradation of sialic acid and shedding of heparan sulfate proteoglycans. NS1 induces expression of sialidases, heparanase, and activates cathepsin L, which activates heparanase via enzymatic cleavage. These effects are probably linked to the endothelial hyperpermeability observed in severe dengue disease. Component of the viral RNA replication complex that functions in virion assembly and antagonizes the host immune response. Functionally, required cofactor for the serine protease function of NS3. May have membrane-destabilizing activity and form viroporins. In terms of biological role, displays three enzymatic activities: serine protease, NTPase and RNA helicase. NS3 serine protease, in association with NS2B, performs its autocleavage and cleaves the polyprotein at dibasic sites in the cytoplasm: C-prM, NS2A-NS2B, NS2B-NS3, NS3-NS4A, NS4A-2K and NS4B-NS5. NS3 RNA helicase binds RNA and unwinds dsRNA in the 3' to 5' direction. Its function is as follows. Regulates the ATPase activity of the NS3 helicase activity. NS4A allows NS3 helicase to conserve energy during unwinding. Plays a role in the inhibition of the host innate immune response. Interacts with host MAVS and thereby prevents the interaction between RIGI and MAVS. In turn, IFN-beta production is impaired. Interacts with host AUP1 which mediates induction of lipophagy in host cells and facilitates production of virus progeny particles. Functions as a signal peptide for NS4B and is required for the interferon antagonism activity of the latter. Functionally, induces the formation of ER-derived membrane vesicles where the viral replication takes place. Inhibits interferon (IFN)-induced host STAT1 phosphorylation and nuclear translocation, thereby preventing the establishment of cellular antiviral state by blocking the IFN-alpha/beta pathway. In terms of biological role, replicates the viral (+) and (-) RNA genome, and performs the capping of genomes in the cytoplasm. NS5 methylates viral RNA cap at guanine N-7 and ribose 2'-O positions. Besides its role in RNA genome replication, also prevents the establishment of cellular antiviral state by blocking the interferon-alpha/beta (IFN-alpha/beta) signaling pathway. Inhibits host TYK2 and STAT2 phosphorylation, thereby preventing activation of JAK-STAT signaling pathway. May reduce immune responses by preventing the recruitment of the host PAF1 complex to interferon-responsive genes. The chain is Genome polyprotein from Aedes aegypti (Yellowfever mosquito).